We begin with the raw amino-acid sequence, 125 residues long: uncharacterized protein (125 aa).

A run of 3 helical transmembrane segments spans residues 20 to 42 (RNGGGTLVVAFAFTAFFSLLTIL), 57 to 76 (LMNAFVLGTITATFAKGVVV), and 81 to 103 (YLFVASLLAAAFSVLMILVYMAS).

The protein localises to the cell membrane. This is an uncharacterized protein from Archaeoglobus fulgidus (strain ATCC 49558 / DSM 4304 / JCM 9628 / NBRC 100126 / VC-16).